The following is an 811-amino-acid chain: Potassium transporter 27 (811 aa).

Over 1 to 64 (MGDDVLGRGS…QEESWARTLK (64 aa)) the chain is Cytoplasmic. A helical membrane pass occupies residues 65-85 (LAFQCVGILYGDIGTSPLFVY). The Extracellular portion of the chain corresponds to 86–102 (SSTFKDGVRHPDDLLGA). A helical transmembrane segment spans residues 103–123 (LSLIIYSFALFTIVKYVFIAL). Topologically, residues 124-188 (RANDDGDGGT…ELLETNRAVK (65 aa)) are cytoplasmic. The helical transmembrane segment at 189–209 (IWLFLLTILATAMVISDAVLT) threads the bilayer. At 210-226 (PAISVLSAVGGLKEKAP) the chain is on the extracellular side. Residues 227 to 247 (NLTTDEIVWITVATLVVLFAI) form a helical membrane-spanning segment. At 248 to 254 (QRFGTDK) the chain is on the cytoplasmic side. A helical transmembrane segment spans residues 255 to 275 (IGYLFAPIILLWLLLIGCVGI). Over 276–310 (YNTIKFDTGVLRAFNLKYIIDYFRRNKKDGWISLS) the chain is Extracellular. The chain crosses the membrane as a helical span at residues 311–331 (GILLCFTGTEALFSDLGYFSI). At 332 to 335 (RSIQ) the chain is on the cytoplasmic side. The helical transmembrane segment at 336-356 (LSFSFGLVPSVLLAYIGQAAY) threads the bilayer. Over 357–375 (LREHPEHIANTFYRSTPNV) the chain is Extracellular. The helical transmembrane segment at 376-396 (MFWPTFILAVAASIIGSQAMI) threads the bilayer. Topologically, residues 397–434 (SCAFATISHLQTLNCFPRVKILHTSRQYSGQLYIPEVN) are cytoplasmic. The helical transmembrane segment at 435-455 (FLLCVGACLVTIGFKTTVIIG) threads the bilayer. The Extracellular segment spans residues 456 to 459 (EAHA). Residues 460-480 (ICVVFVMIITTLLLTIVMLLV) traverse the membrane as a helical segment. The Cytoplasmic segment spans residues 481–482 (WK). A helical transmembrane segment spans residues 483–503 (VSIWYVALFFIVFMSSESIYL). At 504-515 (SAVLYQFVHGEY) the chain is on the extracellular side. The chain crosses the membrane as a helical span at residues 516-536 (VPVAMSVFLMIVMTVWHYVHV). The Cytoplasmic portion of the chain corresponds to 537–811 (KRYEFELEHT…VLKVGIAYEI (275 aa)).

Belongs to the HAK/KUP transporter (TC 2.A.72.3) family.

Its subcellular location is the membrane. Functionally, high-affinity potassium transporter. In Oryza sativa subsp. japonica (Rice), this protein is Potassium transporter 27 (HAK27).